A 513-amino-acid chain; its full sequence is Calcium-dependent protein kinase 24 (513 aa).

The tract at residues 1-33 (MQPDPSGSGGDGNANAKAKLAPPPVTAAGGRPV) is disordered. The Protein kinase domain maps to 47-305 (YRIGKKLGQG…AHEVLCHPWI (259 aa)). ATP-binding positions include 53 to 61 (LGQGQFGTT) and Lys76. The active-site Proton acceptor is the Asp171. The interval 311-341 (APDKPIDSAVLSRLKHFSAMNKLKKMALRVI) is autoinhibitory domain. EF-hand domains are found at residues 348 to 383 (EEIG…VGSE), 384 to 419 (LTEH…MNKL), 420 to 455 (EREE…FGLD), and 458 to 489 (HLED…GNAG). Asp361, Asp363, Ser365, Thr367, Glu372, Asp397, Asp399, Ser401, Thr403, Glu408, Asp433, Asp435, Ser437, Glu444, Asp467, Asn469, Asp471, Gln473, and Glu478 together coordinate Ca(2+).

This sequence belongs to the protein kinase superfamily. Ser/Thr protein kinase family. CDPK subfamily. As to expression, expressed in roots.

It localises to the cytoplasm. The enzyme catalyses L-seryl-[protein] + ATP = O-phospho-L-seryl-[protein] + ADP + H(+). It carries out the reaction L-threonyl-[protein] + ATP = O-phospho-L-threonyl-[protein] + ADP + H(+). With respect to regulation, activated by calcium. Autophosphorylation may play an important role in the regulation of the kinase activity. May play a role in signal transduction pathways that involve calcium as a second messenger. Possesses calcium-dependent protein kinase activity in vitro. This chain is Calcium-dependent protein kinase 24, found in Oryza sativa subsp. japonica (Rice).